Here is a 115-residue protein sequence, read N- to C-terminus: NADH-ubiquinone oxidoreductase chain 3 (115 aa).

The next 3 membrane-spanning stretches (helical) occupy residues 1 to 21 (MMML…VMLL), 58 to 78 (IAVI…IVII), and 84 to 104 (IMVW…GLYY).

It belongs to the complex I subunit 3 family.

The protein localises to the mitochondrion membrane. The catalysed reaction is a ubiquinone + NADH + 5 H(+)(in) = a ubiquinol + NAD(+) + 4 H(+)(out). Functionally, core subunit of the mitochondrial membrane respiratory chain NADH dehydrogenase (Complex I) that is believed to belong to the minimal assembly required for catalysis. Complex I functions in the transfer of electrons from NADH to the respiratory chain. The immediate electron acceptor for the enzyme is believed to be ubiquinone. The sequence is that of NADH-ubiquinone oxidoreductase chain 3 (ND3) from Locusta migratoria (Migratory locust).